A 159-amino-acid chain; its full sequence is Phosphopantetheine adenylyltransferase (159 aa).

Residue Thr10 coordinates substrate. ATP is bound by residues 10 to 11 and His18; that span reads TF. Lys42, Leu74, and Arg88 together coordinate substrate. Residues 89–91, Glu99, and 124–130 each bind ATP; these read GLR and NSFISST.

It belongs to the bacterial CoaD family. Homohexamer. Mg(2+) is required as a cofactor.

It is found in the cytoplasm. It carries out the reaction (R)-4'-phosphopantetheine + ATP + H(+) = 3'-dephospho-CoA + diphosphate. Its pathway is cofactor biosynthesis; coenzyme A biosynthesis; CoA from (R)-pantothenate: step 4/5. In terms of biological role, reversibly transfers an adenylyl group from ATP to 4'-phosphopantetheine, yielding dephospho-CoA (dPCoA) and pyrophosphate. The sequence is that of Phosphopantetheine adenylyltransferase from Shewanella halifaxensis (strain HAW-EB4).